A 180-amino-acid polypeptide reads, in one-letter code: Putative 5'(3')-deoxyribonucleotidase (180 aa).

The active-site Nucleophile is D9. D9, D11, and D135 together coordinate Mg(2+). The Proton donor role is filled by D11.

It belongs to the 5'(3')-deoxyribonucleotidase family. The cofactor is Mg(2+).

Dephosphorylates the 5' and 2'(3')-phosphates of deoxyribonucleotides. The polypeptide is Putative 5'(3')-deoxyribonucleotidase (Staphylococcus aureus (strain Mu50 / ATCC 700699)).